A 667-amino-acid chain; its full sequence is Long-chain-fatty-acid--CoA ligase ACSBG2 (667 aa).

ATP-binding positions include 227-235, 418-423, aspartate 496, arginine 511, and arginine 624; these read TSGTTGTPK and EIYGMS.

This sequence belongs to the ATP-dependent AMP-binding enzyme family. Bubblegum subfamily. Testis- and brainstem-specific. Expressed in pubertal and adult testis. Enriched in germ cells and Sertoli cells while present at a lower level in Leydig cells. Present in testicular Sertoli cells and large motoneurons in the medulla oblongata and cervical spinal cord (at protein level).

Its subcellular location is the cytoplasm. It is found in the membrane. The catalysed reaction is a long-chain fatty acid + ATP + CoA = a long-chain fatty acyl-CoA + AMP + diphosphate. It carries out the reaction (5Z,8Z,11Z,14Z)-eicosatetraenoate + ATP + CoA = (5Z,8Z,11Z,14Z)-eicosatetraenoyl-CoA + AMP + diphosphate. The enzyme catalyses hexadecanoate + ATP + CoA = hexadecanoyl-CoA + AMP + diphosphate. It catalyses the reaction (9Z)-octadecenoate + ATP + CoA = (9Z)-octadecenoyl-CoA + AMP + diphosphate. The catalysed reaction is (9Z,12Z)-octadecadienoate + ATP + CoA = (9Z,12Z)-octadecadienoyl-CoA + AMP + diphosphate. It carries out the reaction tetracosanoate + ATP + CoA = tetracosanoyl-CoA + AMP + diphosphate. Functionally, catalyzes the conversion of fatty acids such as long chain and very long-chain fatty acids to their active form acyl-CoAs for both synthesis of cellular lipids, and degradation via beta-oxidation. Can activate diverse saturated, monosaturated and polyunsaturated fatty acids. Has increased ability to activate oleic and linoleic acid. May play a role in spermatogenesis. The sequence is that of Long-chain-fatty-acid--CoA ligase ACSBG2 from Mus musculus (Mouse).